The primary structure comprises 391 residues: ATP-sensitive inward rectifier potassium channel 1 (391 aa).

Topologically, residues 1-77 are cytoplasmic; that stretch reads MNASSRNVFD…IWTTVLDLKW (77 aa). Residue serine 44 is modified to Phosphoserine; by SGK1. A helical membrane pass occupies residues 78–102; it reads RYKMTIFITAFLGSWFFFGLLWYAV. The Extracellular portion of the chain corresponds to 103 to 127; it reads AYIHKDLPEFHPSANHTPCVENING. Asparagine 117 carries N-linked (GlcNAc...) asparagine glycosylation. The segment at residues 128-139 is an intramembrane region (helical; Pore-forming); that stretch reads LTSAFLFSLETQ. An intramembrane region (pore-forming) is located at residues 140–146; that stretch reads VTIGYGF. The short motif at 141-146 is the Selectivity filter element; it reads TIGYGF. Residues 147–155 are Extracellular-facing; sequence RCVTEQCAT. The helical transmembrane segment at 156-177 threads the bilayer; that stretch reads AIFLLIFQSILGVIINSFMCGA. At 178–391 the chain is on the cytoplasmic side; the sequence is ILAKISRPKK…EVNETDDTKM (214 aa). Residues 180–207 are polyphosphoinositide (PIP2)-binding; the sequence is AKISRPKKRAKTITFSKNAVISKRGGKL. ATP is bound at residue 223-230; that stretch reads GSHIYGKL.

It belongs to the inward rectifier-type potassium channel (TC 1.A.2.1) family. KCNJ1 subfamily. In terms of assembly, interacts with SGK1 and SLC9A3R2/NHERF2. Phosphorylation at Ser-44 by SGK1 is necessary for its expression at the cell membrane. As to expression, in the kidney and pancreatic islets. Lower levels in skeletal muscle, pancreas, spleen, brain, heart and liver.

Its subcellular location is the cell membrane. It carries out the reaction K(+)(in) = K(+)(out). Its activity is regulated as follows. Inhibited by WNK3. Activated by phosphatidylinositol 4,5 biphosphate (PtdIns(4,5)P2). Its function is as follows. Inward rectifier potassium channels are characterized by a greater tendency to allow potassium to flow into the cell rather than out of it. Their voltage dependence is regulated by the concentration of extracellular potassium; as external potassium is raised, the voltage range of the channel opening shifts to more positive voltages. The inward rectification is mainly due to the blockage of outward current by internal magnesium. This channel is activated by internal ATP and can be blocked by external barium. In the kidney, probably plays a major role in potassium homeostasis. This Homo sapiens (Human) protein is ATP-sensitive inward rectifier potassium channel 1 (KCNJ1).